Here is a 242-residue protein sequence, read N- to C-terminus: Probable transcriptional regulatory protein NGK_1508 (242 aa).

Belongs to the TACO1 family.

It localises to the cytoplasm. The protein is Probable transcriptional regulatory protein NGK_1508 of Neisseria gonorrhoeae (strain NCCP11945).